The sequence spans 434 residues: CinA-like protein (434 aa).

This sequence belongs to the CinA family.

This Mycobacterium avium (strain 104) protein is CinA-like protein.